Consider the following 275-residue polypeptide: Formamidopyrimidine-DNA glycosylase (275 aa).

Residue proline 2 is the Schiff-base intermediate with DNA of the active site. The Proton donor role is filled by glutamate 3. Lysine 58 acts as the Proton donor; for beta-elimination activity in catalysis. DNA-binding residues include histidine 93, arginine 111, and arginine 156. The segment at 241 to 275 (FVYDRAGQPCRVCNTPIRQIVQGQRSTYFCPTCQR) adopts an FPG-type zinc-finger fold. Arginine 265 serves as the catalytic Proton donor; for delta-elimination activity.

The protein belongs to the FPG family. In terms of assembly, monomer. The cofactor is Zn(2+).

It carries out the reaction Hydrolysis of DNA containing ring-opened 7-methylguanine residues, releasing 2,6-diamino-4-hydroxy-5-(N-methyl)formamidopyrimidine.. The enzyme catalyses 2'-deoxyribonucleotide-(2'-deoxyribose 5'-phosphate)-2'-deoxyribonucleotide-DNA = a 3'-end 2'-deoxyribonucleotide-(2,3-dehydro-2,3-deoxyribose 5'-phosphate)-DNA + a 5'-end 5'-phospho-2'-deoxyribonucleoside-DNA + H(+). In terms of biological role, involved in base excision repair of DNA damaged by oxidation or by mutagenic agents. Acts as a DNA glycosylase that recognizes and removes damaged bases. Has a preference for oxidized purines, such as 7,8-dihydro-8-oxoguanine (8-oxoG). Has AP (apurinic/apyrimidinic) lyase activity and introduces nicks in the DNA strand. Cleaves the DNA backbone by beta-delta elimination to generate a single-strand break at the site of the removed base with both 3'- and 5'-phosphates. This Burkholderia lata (strain ATCC 17760 / DSM 23089 / LMG 22485 / NCIMB 9086 / R18194 / 383) protein is Formamidopyrimidine-DNA glycosylase.